The chain runs to 322 residues: Cytochrome f (322 aa).

Positions 1 to 35 are cleaved as a signal peptide; that stretch reads MQTRNTFSWTWIREEITRSISVSLMIYIITWSSIS. Y38, C58, C61, and H62 together coordinate heme. Residues 288 to 308 form a helical membrane-spanning segment; it reads VQGLLFFLGSVVLAQIFLVLK.

Belongs to the cytochrome f family. The 4 large subunits of the cytochrome b6-f complex are cytochrome b6, subunit IV (17 kDa polypeptide, petD), cytochrome f and the Rieske protein, while the 4 small subunits are PetG, PetL, PetM and PetN. The complex functions as a dimer. Heme serves as cofactor.

The protein resides in the plastid. It is found in the chloroplast thylakoid membrane. Component of the cytochrome b6-f complex, which mediates electron transfer between photosystem II (PSII) and photosystem I (PSI), cyclic electron flow around PSI, and state transitions. This is Cytochrome f from Aethionema grandiflorum (Persian stone-cress).